The chain runs to 97 residues: YcgL domain-containing protein PSEEN4034 (97 aa).

Residues 3 to 87 (RICSIYKSPR…PDDDYIEHLP (85 aa)) enclose the YcgL domain.

The sequence is that of YcgL domain-containing protein PSEEN4034 from Pseudomonas entomophila (strain L48).